A 242-amino-acid chain; its full sequence is Pyridoxine 5'-phosphate synthase (242 aa).

N9 contributes to the 3-amino-2-oxopropyl phosphate binding site. 11 to 12 (DH) serves as a coordination point for 1-deoxy-D-xylulose 5-phosphate. A 3-amino-2-oxopropyl phosphate-binding site is contributed by R20. Catalysis depends on H45, which acts as the Proton acceptor. 1-deoxy-D-xylulose 5-phosphate is bound by residues R47 and H52. Residue E72 is the Proton acceptor of the active site. T102 is a binding site for 1-deoxy-D-xylulose 5-phosphate. H193 functions as the Proton donor in the catalytic mechanism. Residues G194 and 215–216 (GH) each bind 3-amino-2-oxopropyl phosphate.

Belongs to the PNP synthase family. As to quaternary structure, homooctamer; tetramer of dimers.

The protein resides in the cytoplasm. It carries out the reaction 3-amino-2-oxopropyl phosphate + 1-deoxy-D-xylulose 5-phosphate = pyridoxine 5'-phosphate + phosphate + 2 H2O + H(+). It functions in the pathway cofactor biosynthesis; pyridoxine 5'-phosphate biosynthesis; pyridoxine 5'-phosphate from D-erythrose 4-phosphate: step 5/5. Catalyzes the complicated ring closure reaction between the two acyclic compounds 1-deoxy-D-xylulose-5-phosphate (DXP) and 3-amino-2-oxopropyl phosphate (1-amino-acetone-3-phosphate or AAP) to form pyridoxine 5'-phosphate (PNP) and inorganic phosphate. This Idiomarina loihiensis (strain ATCC BAA-735 / DSM 15497 / L2-TR) protein is Pyridoxine 5'-phosphate synthase.